Here is a 336-residue protein sequence, read N- to C-terminus: 3-isopropylmalate dehydrogenase (336 aa).

Substrate is bound by residues Arg-87, Arg-97, Arg-121, and Asp-211. Mg(2+)-binding residues include Asp-211, Asp-235, and Asp-239. Position 271 to 283 (271 to 283 (GSAPDIAGQGIAD)) interacts with NAD(+).

It belongs to the isocitrate and isopropylmalate dehydrogenases family. LeuB type 2 subfamily. As to quaternary structure, homodimer. Mg(2+) serves as cofactor. The cofactor is Mn(2+).

It is found in the cytoplasm. The enzyme catalyses (2R,3S)-3-isopropylmalate + NAD(+) = 4-methyl-2-oxopentanoate + CO2 + NADH. The protein operates within amino-acid biosynthesis; L-leucine biosynthesis; L-leucine from 3-methyl-2-oxobutanoate: step 3/4. Functionally, catalyzes the oxidation of 3-carboxy-2-hydroxy-4-methylpentanoate (3-isopropylmalate) to 3-carboxy-4-methyl-2-oxopentanoate. The product decarboxylates to 4-methyl-2 oxopentanoate. In Rhodococcus jostii (strain RHA1), this protein is 3-isopropylmalate dehydrogenase.